The chain runs to 231 residues: Augmin complex subunit dgt2 (231 aa).

Positions 128-199 (QEADLSCDQK…VQTKAELLRG (72 aa)) form a coiled coil.

As to quaternary structure, component of the augmin complex composed of dgt2, dgt3, dgt4, dgt5, dgt6, msd1, msd5 and wac. The complex interacts directly or indirectly with microtubules and is required for centrosome-independent generation of spindle microtubules. dgt2 interacts directly with wac (via coiled coil). As to expression, in adult females, detected only in the abdomen with no expression in the head or thorax (at protein level).

It localises to the cytoplasm. The protein resides in the cytoskeleton. Its subcellular location is the spindle. It is found in the spindle pole. As part of the augmin complex, plays a role in centrosome-independent generation of spindle microtubules. The complex is required for mitotic spindle assembly through its involvement in localizing gamma-tubulin to spindle microtubules. dgt2 binds to microtubules in vitro. The chain is Augmin complex subunit dgt2 from Drosophila melanogaster (Fruit fly).